Here is a 1398-residue protein sequence, read N- to C-terminus: Pyrolysin (1398 aa).

A signal peptide spans 1 to 26 (MNKKGLTVLFIAIMLLSVVPVHFVSA). The propeptide occupies 27–149 (GTPPVSSENS…KTKEPSLEPK (123 aa)). An N-linked (GlcNAc...) asparagine glycan is attached at asparagine 152. Residues 154–656 (TWVINALQFI…HGLVNVTKSW (503 aa)) form the Peptidase S8 domain. The Charge relay system role is filled by aspartate 179. N-linked (GlcNAc...) asparagine glycosylation is found at asparagine 222, asparagine 228, asparagine 240, asparagine 257, asparagine 262, asparagine 298, and asparagine 327. Histidine 365 acts as the Charge relay system in catalysis. Asparagine 406 carries an N-linked (GlcNAc...) asparagine glycan. The Charge relay system role is filled by serine 590. Asparagine 651, asparagine 663, asparagine 739, asparagine 792, asparagine 893, asparagine 908, asparagine 917, asparagine 929, asparagine 1048, asparagine 1056, asparagine 1084, asparagine 1117, asparagine 1133, asparagine 1140, asparagine 1148, asparagine 1208, asparagine 1233, asparagine 1237, and asparagine 1332 each carry an N-linked (GlcNAc...) asparagine glycan.

It belongs to the peptidase S8 family. Post-translationally, LWM pyrolysin seems to be produced by autoproteolytic activation of HMW pyrolysin. Glycosylated.

The protein localises to the cell envelope. In terms of biological role, has endopeptidase activity toward caseins, casein fragments including alpha-S1-casein and synthetic peptides. This Pyrococcus furiosus (strain ATCC 43587 / DSM 3638 / JCM 8422 / Vc1) protein is Pyrolysin (pls).